The primary structure comprises 1115 residues: MERATGPGSLARTLLLPLLLGLVAGTVTARRTSDLLAPTAEAAFGLGAAAAPTSATRVPATGAVIAAEVTVEDSEALPAAAGEQEAREPEPEPEEEPDIRPCGRSLVIISTLDGRIAALDPENHGKKQWDLDVGSGSLVSSSLSKPEVFGNKMIIPSLDGDLFQWDRDRESMETVPFTVESLLESSYKFGDDVVLVGGKSLTTYGLSAYSGKVRYICSALGCRQWDNDEMEQEEDILLLQRTQKTVRAVGPRSGNEKWNFSVGHFELRYIPDMETRAGFIESTLKPSGNKEQSKIISDVEEQEAVMMDTVIKVSVADWKVMAFNKKGGHLEWEYQFCTPIASAWLVKDGKVIPISLFDDTSYAPNDGVLEDEEDIVEAARGATENSVYLGMYRGQLYLQSSVRISEKFPTSPKALESVSSENAIIPLPTIKWKPLIHSPSRTPVLVGSDEFDKCLSNDKFSHEEYSNGALSILQYPYDNGYYLPYYKRERNKRSTQITVRFLDNPNYKNIRKKDPVLLLHWWKEIVGTIVFCIVATTFIVRRLFHPHPHRQRKESETQCQTENKYDAVSGEANDSSWNDIKNSGYVSRYLTDFEPIQCMGRGGFGVVFEARNKVDDCNYAIKRIRLPNRELAREKVMREVKALAKLEHPGIVRYFNAWLEAPPEKWQEKMDEIWLKDDSTDWPLSSPSPVDAPSVKIRRMDPFSTKECIEIIAPSPHSSRSFSVGISCSQTSSSESQFSPLEFSGMDHGNVSKSADAVCQLQDSCLTDCEGEDGTMDGNDEGHSFELCPSEASPYIRSRERTSSSIVFEDSGCDNASSKEEPRMNQPPVGNHYANKLSALRHSGSKSSEPTVSVSPSRPTTLSLDLTKSSVGKLQPSSPKVYLYIQMQLCRKENLKDWLNSRCTIEARERSVCLHIFLQIAEAVEFLHSKGLMHRDLKPSNIFFTMDDVVKVGDFGLVTAMDQDEEDQMVLTPMPGYARHTGQVGTKLYMSPEQIHGNSYSHKVDIFSLGLILFELLYPFGTQMERVRILTDVRDLKFPPLFAQKYPREYAMVQDMLSPSPTERPEAASIIENAIFEDLEFPEKTLLRQRSRSMSSPGAKHSRHSSSPHSPLPSN.

The signal sequence occupies residues 1–29 (MERATGPGSLARTLLLPLLLGLVAGTVTA). Residues 30-514 (RRTSDLLAPT…PNYKNIRKKD (485 aa)) are Extracellular-facing. The segment at 74–101 (SEALPAAAGEQEAREPEPEPEEEPDIRP) is disordered. Asn-259 carries N-linked (GlcNAc...) asparagine glycosylation. The chain crosses the membrane as a helical span at residues 515–535 (PVLLLHWWKEIVGTIVFCIVA). The Cytoplasmic portion of the chain corresponds to 536–1115 (TTFIVRRLFH…SSPHSPLPSN (580 aa)). The Protein kinase domain maps to 593–1076 (FEPIQCMGRG…AASIIENAIF (484 aa)). 599-607 (MGRGGFGVV) is an ATP binding site. Tyr-619 carries the phosphotyrosine; by autocatalysis modification. Residue Lys-622 participates in ATP binding. Residues 647 to 887 (EHPGIVRYFN…SPKVYLYIQM (241 aa)) form an insert loop region. Position 715 is a phosphoserine (Ser-715). Position 802 is a phosphothreonine (Thr-802). 2 disordered regions span residues 807–832 (VFED…VGNH) and 841–860 (RHSG…SRPT). Positions 845–860 (SKSSEPTVSVSPSRPT) are enriched in polar residues. Catalysis depends on Asp-936, which acts as the Proton acceptor. At Thr-981 the chain carries Phosphothreonine. Residues 1087–1115 (LRQRSRSMSSPGAKHSRHSSSPHSPLPSN) form a disordered region. Ser-1093 carries the post-translational modification Phosphoserine.

The protein belongs to the protein kinase superfamily. Ser/Thr protein kinase family. GCN2 subfamily. In terms of assembly, forms dimers with HSPA5/BIP in resting cells. Homotetramerizes in response to endoplasmic reticulum (ER) stress, leading to its activation. Interacts with HSP90B1/GRP94. Interacts with DNAJC3; inhibiting EIF2AK3/PERK activity. Interacts with ATAD3A; ATAD3A and EIF2S1/eIF-2-alpha occupy a common binding site within the cytoplasmic loop of EIF2AK3/PERK, leading to prevent EIF2AK3/PERK association with its substrate EIF2S1/eIF-2-alpha. Interacts with MFN2. Interacts with TMEM33. Interacts with PDIA6. Interacts with LACC1. In terms of processing, oligomerization of the N-terminal ER luminal domain by ER stress promotes EIF2AK3/PERK trans-autophosphorylation of the C-terminal cytoplasmic kinase domain at multiple residues including Thr-981 on the kinase activation loop. Autophosphorylated at Tyr-619 following endoplasmic reticulum stress, leading to activate its activity. Dephosphorylated at Tyr-619 by PTPN1/PTP1B, leading to inactivate its enzyme activity. Phosphorylation at Thr-802 by AKT (AKT1, AKT2 and/or AKT3) inactivates EIF2AK3/PERK. ADP-ribosylated by PARP16 upon ER stress, which increases kinase activity.

It is found in the endoplasmic reticulum membrane. It catalyses the reaction L-seryl-[protein] + ATP = O-phospho-L-seryl-[protein] + ADP + H(+). The catalysed reaction is L-threonyl-[protein] + ATP = O-phospho-L-threonyl-[protein] + ADP + H(+). It carries out the reaction L-tyrosyl-[protein] + ATP = O-phospho-L-tyrosyl-[protein] + ADP + H(+). Inhibited by HSPA5/BIP in absence of stress. Perturbation in protein folding in the endoplasmic reticulum (ER) promotes reversible dissociation from HSPA5/BIP and oligomerization, resulting in trans-autophosphorylation and kinase activity induction. Inactivated following phosphorylation at Thr-802 by AKT (AKT1, AKT2 and/or AKT3). Inhibited by ATAD3A at mitochondria-endoplasmic reticulum contact sites, providing a safe haven for mitochondrial protein translation during ER stress. Metabolic-stress sensing protein kinase that phosphorylates the alpha subunit of eukaryotic translation initiation factor 2 (EIF2S1/eIF-2-alpha) in response to various stress, such as unfolded protein response (UPR). Key effector of the integrated stress response (ISR) to unfolded proteins: EIF2AK3/PERK specifically recognizes and binds misfolded proteins, leading to its activation and EIF2S1/eIF-2-alpha phosphorylation. EIF2S1/eIF-2-alpha phosphorylation in response to stress converts EIF2S1/eIF-2-alpha in a global protein synthesis inhibitor, leading to a global attenuation of cap-dependent translation, while concomitantly initiating the preferential translation of ISR-specific mRNAs, such as the transcriptional activators ATF4 and QRICH1, and hence allowing ATF4- and QRICH1-mediated reprogramming. The EIF2AK3/PERK-mediated unfolded protein response increases mitochondrial oxidative phosphorylation by promoting ATF4-mediated expression of COX7A2L/SCAF1, thereby increasing formation of respiratory chain supercomplexes. In contrast to most subcellular compartments, mitochondria are protected from the EIF2AK3/PERK-mediated unfolded protein response due to EIF2AK3/PERK inhibition by ATAD3A at mitochondria-endoplasmic reticulum contact sites. In addition to EIF2S1/eIF-2-alpha, also phosphorylates NFE2L2/NRF2 in response to stress, promoting release of NFE2L2/NRF2 from the BCR(KEAP1) complex, leading to nuclear accumulation and activation of NFE2L2/NRF2. Serves as a critical effector of unfolded protein response (UPR)-induced G1 growth arrest due to the loss of cyclin-D1 (CCND1). Involved in control of mitochondrial morphology and function. The sequence is that of Eukaryotic translation initiation factor 2-alpha kinase 3 from Bos taurus (Bovine).